We begin with the raw amino-acid sequence, 302 residues long: MSSSQFKQLEKLGNGTYATVYKGLNKSTGVYVALKEVKLDSEEGTPSTAIREISLMKELKHDNIVRLYDVIHTENKLTLVFEYMDNDLKKYMDSRTVGNAPRGLEMNLVKYFQWQLLEGLAFCHENKILHRDLKPQNLLITKRGQLKLGDFGLARAFGIPVNTFSSEVVTLWYRAPDVLMGSRTYSTSIDIWSCGCILAEMITGKPLFPGTNDEEQLKLIFDKMGTPNETTWPGVTSLPKYNPNFQQRLPKDLKAELQPYVKEPLDDNVIDLLHGLLQLNPDMRLSAKQALLHPWFSEYYES.

In terms of domain architecture, Protein kinase spans 6–296 (FKQLEKLGNG…AKQALLHPWF (291 aa)). Residues 12 to 20 (LGNGTYATV) and Lys35 contribute to the ATP site. Asp132 functions as the Proton acceptor in the catalytic mechanism.

The protein belongs to the protein kinase superfamily. CMGC Ser/Thr protein kinase family. CDC2/CDKX subfamily. Interacts with a number of cyclins.

The catalysed reaction is L-seryl-[protein] + ATP = O-phospho-L-seryl-[protein] + ADP + H(+). The enzyme catalyses L-threonyl-[protein] + ATP = O-phospho-L-threonyl-[protein] + ADP + H(+). Functionally, when phosphate concentrations are high it phosphorylates the PHO4 transcription factor thus establishing repression. In Candida glabrata (strain ATCC 2001 / BCRC 20586 / JCM 3761 / NBRC 0622 / NRRL Y-65 / CBS 138) (Yeast), this protein is Negative regulator of the PHO system (PHO85).